Consider the following 461-residue polypeptide: UDP-N-acetylmuramoylalanine--D-glutamate ligase (461 aa).

123–129 (GTNGKTT) is an ATP binding site.

The protein belongs to the MurCDEF family.

The protein resides in the cytoplasm. The enzyme catalyses UDP-N-acetyl-alpha-D-muramoyl-L-alanine + D-glutamate + ATP = UDP-N-acetyl-alpha-D-muramoyl-L-alanyl-D-glutamate + ADP + phosphate + H(+). Its pathway is cell wall biogenesis; peptidoglycan biosynthesis. Cell wall formation. Catalyzes the addition of glutamate to the nucleotide precursor UDP-N-acetylmuramoyl-L-alanine (UMA). The protein is UDP-N-acetylmuramoylalanine--D-glutamate ligase of Natranaerobius thermophilus (strain ATCC BAA-1301 / DSM 18059 / JW/NM-WN-LF).